A 137-amino-acid chain; its full sequence is ATP synthase epsilon chain (137 aa).

Belongs to the ATPase epsilon chain family. As to quaternary structure, F-type ATPases have 2 components, CF(1) - the catalytic core - and CF(0) - the membrane proton channel. CF(1) has five subunits: alpha(3), beta(3), gamma(1), delta(1), epsilon(1). CF(0) has three main subunits: a, b and c.

Its subcellular location is the cellular thylakoid membrane. Produces ATP from ADP in the presence of a proton gradient across the membrane. The sequence is that of ATP synthase epsilon chain (atpC) from Nostoc sp. (strain PCC 7120 / SAG 25.82 / UTEX 2576).